Reading from the N-terminus, the 870-residue chain is Lon protease (870 aa).

The region spanning 1 to 270 is the Lon N-terminal domain; the sequence is MPTNSYRFLV…KLYEHIHTFA (270 aa). Residue 454–461 participates in ATP binding; it reads GPPGTGKT. A Lon proteolytic domain is found at 691-870; the sequence is SPQIGTVTGL…YQQIYDFIFK (180 aa). Catalysis depends on residues Ser-777 and Lys-820.

The protein belongs to the peptidase S16 family. Homohexamer. Organized in a ring with a central cavity.

It localises to the cytoplasm. It carries out the reaction Hydrolysis of proteins in presence of ATP.. Its function is as follows. ATP-dependent serine protease that mediates the selective degradation of mutant and abnormal proteins as well as certain short-lived regulatory proteins. Required for cellular homeostasis and for survival from DNA damage and developmental changes induced by stress. Degrades polypeptides processively to yield small peptide fragments that are 5 to 10 amino acids long. Binds to DNA in a double-stranded, site-specific manner. In Mesomycoplasma hyopneumoniae (strain 232) (Mycoplasma hyopneumoniae), this protein is Lon protease.